The primary structure comprises 244 residues: 7-cyano-7-deazaguanine synthase (244 aa).

Residue 19–29 (FSGGQDSTTCL) participates in ATP binding. Zn(2+) contacts are provided by Cys207, Cys222, Cys225, and Cys228.

The protein belongs to the QueC family. Zn(2+) serves as cofactor.

It catalyses the reaction 7-carboxy-7-deazaguanine + NH4(+) + ATP = 7-cyano-7-deazaguanine + ADP + phosphate + H2O + H(+). The protein operates within purine metabolism; 7-cyano-7-deazaguanine biosynthesis. In terms of biological role, catalyzes the ATP-dependent conversion of 7-carboxy-7-deazaguanine (CDG) to 7-cyano-7-deazaguanine (preQ(0)). In Bordetella avium (strain 197N), this protein is 7-cyano-7-deazaguanine synthase.